Consider the following 159-residue polypeptide: Aphid transmission protein (159 aa).

It belongs to the caulimoviridae ORF II family.

Its function is as follows. This protein is involved in virus transmission. This Cauliflower mosaic virus (strain CM-1841) (CaMV) protein is Aphid transmission protein.